The primary structure comprises 726 residues: Peroxisomal bifunctional enzyme (726 aa).

The tract at residues 1–284 (MAEYLRLPHS…FAERSAPKWS (284 aa)) is enoyl-CoA hydratase / isomerase. Position 38 is an N6-succinyllysine (Lys38). Gly103 lines the substrate pocket. Lys167 is modified (N6-acetyllysine; alternate). An N6-succinyllysine; alternate modification is found at Lys167. Lys173 is subject to N6-acetyllysine. Residue Lys185 is modified to N6-succinyllysine. Position 221 is an N6-acetyllysine; alternate (Lys221). Lys221 carries the post-translational modification N6-succinyllysine; alternate. N6-succinyllysine occurs at positions 282, 292, and 333. Residues 285 to 575 (TPSGASWKTA…DMLCELGRFG (291 aa)) form a 3-hydroxyacyl-CoA dehydrogenase region. 2 positions are modified to N6-acetyllysine: Lys348 and Lys352. Residues 352 to 371 (KSRQQCGQQRSGPKPRFSSS) form a disordered region. Over residues 353-371 (SRQQCGQQRSGPKPRFSSS) the composition is skewed to polar residues. Residue Lys467 is modified to N6-acetyllysine. Lys535 carries the post-translational modification N6-succinyllysine. An N6-acetyllysine; alternate mark is found at Lys587, Lys594, and Lys713. An N6-succinyllysine; alternate mark is found at Lys587, Lys594, and Lys713. The Microbody targeting signal signature appears at 724-726 (SKL). Lys725 is modified (N6-succinyllysine).

In the N-terminal section; belongs to the enoyl-CoA hydratase/isomerase family. This sequence in the C-terminal section; belongs to the 3-hydroxyacyl-CoA dehydrogenase family. In terms of assembly, monomer. Post-translationally, acetylated, leading to enhanced enzyme activity. Acetylation is enhanced by up to 80% after treatment either with trichostin A (TSA) or with nicotinamide (NAM) with highest increase on Lys-348. Acetylation and enzyme activity increased by about 1.5% on addition of fatty acids.

The protein localises to the peroxisome. The enzyme catalyses a (3S)-3-hydroxyacyl-CoA = a (2E)-enoyl-CoA + H2O. It catalyses the reaction a 4-saturated-(3S)-3-hydroxyacyl-CoA = a (3E)-enoyl-CoA + H2O. The catalysed reaction is a (3Z)-enoyl-CoA = a 4-saturated (2E)-enoyl-CoA. It carries out the reaction a (3E)-enoyl-CoA = a 4-saturated (2E)-enoyl-CoA. The enzyme catalyses a (3S)-3-hydroxyacyl-CoA + NAD(+) = a 3-oxoacyl-CoA + NADH + H(+). It catalyses the reaction (2S,3S)-3-hydroxy-2-methylbutanoyl-CoA = (2E)-2-methylbut-2-enoyl-CoA + H2O. The catalysed reaction is (3S)-hydroxyhexadecanoyl-CoA + NAD(+) = 3-oxohexadecanoyl-CoA + NADH + H(+). It carries out the reaction (3S)-hydroxyhexadecanoyl-CoA = (2E)-hexadecenoyl-CoA + H2O. The enzyme catalyses (2E)-hexadecenedioyl-CoA + H2O = (3S)-hydroxyhexadecanedioyl-CoA. It catalyses the reaction (3S)-hydroxyhexadecanedioyl-CoA + NAD(+) = 3-oxohexadecanedioyl-CoA + NADH + H(+). The catalysed reaction is (3E,5Z)-tetradecadienoyl-CoA = (2E,5Z)-tetradecadienoyl-CoA. It carries out the reaction (3E,5Z)-octadienoyl-CoA = (2E,5Z)-octadienoyl-CoA. The enzyme catalyses (3S)-hydroxydecanoyl-CoA + NAD(+) = 3-oxodecanoyl-CoA + NADH + H(+). It catalyses the reaction (3E)-decenoyl-CoA = (2E)-decenoyl-CoA. The catalysed reaction is (3Z)-hexenoyl-CoA = (2E)-hexenoyl-CoA. It carries out the reaction (3E)-hexenoyl-CoA = (2E)-hexenoyl-CoA. The enzyme catalyses (3S)-hydroxydecanoyl-CoA = (2E)-decenoyl-CoA + H2O. It catalyses the reaction (3S)-hydroxyhexanoyl-CoA = (2E)-hexenoyl-CoA + H2O. It participates in lipid metabolism; fatty acid beta-oxidation. Enzyme activity enhanced by acetylation. Peroxisomal trifunctional enzyme possessing 2-enoyl-CoA hydratase, 3-hydroxyacyl-CoA dehydrogenase, and delta 3, delta 2-enoyl-CoA isomerase activities. Catalyzes two of the four reactions of the long chain fatty acids peroxisomal beta-oxidation pathway. Can also use branched-chain fatty acids such as 2-methyl-2E-butenoyl-CoA as a substrate, which is hydrated into (2S,3S)-3-hydroxy-2-methylbutanoyl-CoA. Optimal isomerase for 2,5 double bonds into 3,5 form isomerization in a range of enoyl-CoA species. Also able to isomerize both 3-cis and 3-trans double bonds into the 2-trans form in a range of enoyl-CoA species. Regulates the amount of medium-chain dicarboxylic fatty acids which are essential regulators of all fatty acid oxidation pathways. Also involved in the degradation of long-chain dicarboxylic acids through peroxisomal beta-oxidation. This chain is Peroxisomal bifunctional enzyme (EHHADH), found in Cavia porcellus (Guinea pig).